Consider the following 620-residue polypeptide: Estrogen receptor (620 aa).

Composition is skewed to polar residues over residues 1–10 and 101–111; these read MSKRQSSVQI and GSLQSLGSGPT. 2 disordered regions span residues 1–55 and 88–111; these read MSKR…RGSG and YSAPLETNGPPSEGSLQSLGSGPT. Positions 1–185 are modulating; the sequence is MSKRQSSVQI…GFEMAKDTRF (185 aa). 2 NR C4-type zinc fingers span residues 186–206 and 222–246; these read CAVCSDYASGYHYGVWSCEGC and CPATNQCTIDRNRRKSCQACRLRKC. The nuclear receptor DNA-binding region spans 186-251; that stretch reads CAVCSDYASG…RLRKCYEVGM (66 aa). The hinge stretch occupies residues 252-314; the sequence is MKGGVRKDRI…GGGRLSVTSI (63 aa). The segment at 286-308 is disordered; the sequence is KTVHYDGRKRSSTGGGGGGGGGR. Gly residues predominate over residues 298 to 308; sequence TGGGGGGGGGR. An NR LBD domain is found at 315-551; sequence PPEQVLLLLQ…DLLLEMLDAH (237 aa). Positions 558–620 are disordered; that stretch reads RAPQSLSQVD…RPDCTPALQD (63 aa).

The protein belongs to the nuclear hormone receptor family. NR3 subfamily. As to quaternary structure, binds DNA as a homodimer. Can form a heterodimer with ER-beta. In terms of tissue distribution, widely expressed in brain, ovary, testis, and female liver.

It is found in the nucleus. The steroid hormones and their receptors are involved in the regulation of eukaryotic gene expression and affect cellular proliferation and differentiation in target tissues. The protein is Estrogen receptor (esr1) of Oryzias latipes (Japanese rice fish).